A 191-amino-acid chain; its full sequence is Small ribosomal subunit protein uS5 (191 aa).

The disordered stretch occupies residues 1 to 20 (MAGERERGGRERSRDREERD). Residues 23–86 (FVDKLVHINR…ESAKRNLTRV (64 aa)) enclose the S5 DRBM domain.

This sequence belongs to the universal ribosomal protein uS5 family. As to quaternary structure, part of the 30S ribosomal subunit. Contacts proteins S4 and S8.

Its function is as follows. With S4 and S12 plays an important role in translational accuracy. Located at the back of the 30S subunit body where it stabilizes the conformation of the head with respect to the body. The protein is Small ribosomal subunit protein uS5 of Nitrobacter winogradskyi (strain ATCC 25391 / DSM 10237 / CIP 104748 / NCIMB 11846 / Nb-255).